Here is a 354-residue protein sequence, read N- to C-terminus: N-acylethanolamine-hydrolyzing acid amidase (354 aa).

The signal sequence occupies residues Met1–Pro22. N-linked (GlcNAc...) asparagine glycans are attached at residues Asn35 and Asn104. Cys123 (nucleophile) is an active-site residue. 3 N-linked (GlcNAc...) asparagine glycosylation sites follow: Asn306, Asn312, and Asn352.

The protein belongs to the acid ceramidase family. Heterodimer of an alpha and a beta subunit, produced by autocatalytic cleavage. In terms of processing, N-glycosylated. Tunicamycin treatment causes a reduction in specific activity against N-palmitoylethanolamine. Post-translationally, autoproteolytic cleavage at pH 4.5 gives rise to the alpha and beta subunit. Cleavage gives rise to a conformation change that activates the enzyme. The same catalytic Cys residue mediates the autoproteolytic cleavage and subsequent hydrolysis of lipid substrates.

The protein localises to the lysosome. It localises to the membrane. It catalyses the reaction N-hexadecanoylethanolamine + H2O = ethanolamine + hexadecanoate. The enzyme catalyses an N-(long-chain fatty acyl)ethanolamine + H2O = a long-chain fatty acid + ethanolamine. The catalysed reaction is N-dodecanoylethanolamine + H2O = dodecanoate + ethanolamine. It carries out the reaction N-tetradecanoylethanolamine + H2O = tetradecanoate + ethanolamine. It catalyses the reaction an N-acylsphing-4-enine + H2O = sphing-4-enine + a fatty acid. The enzyme catalyses N-hexadecanoylsphing-4-enine + H2O = sphing-4-enine + hexadecanoate. The catalysed reaction is N-dodecanoylsphing-4-enine + H2O = dodecanoate + sphing-4-enine. It functions in the pathway lipid metabolism; fatty acid metabolism. In terms of biological role, degrades bioactive fatty acid amides to their corresponding acids, with the following preference: N-palmitoylethanolamine &gt; N-myristoylethanolamine &gt; N-stearoylethanolamine &gt; N-oleoylethanolamine &gt; N-linoleoylethanolamine &gt; N-arachidonoylethanolamine. This is N-acylethanolamine-hydrolyzing acid amidase from Cavia porcellus (Guinea pig).